We begin with the raw amino-acid sequence, 202 residues long: 3-isopropylmalate dehydratase small subunit (202 aa).

Belongs to the LeuD family. LeuD type 1 subfamily. As to quaternary structure, heterodimer of LeuC and LeuD.

The enzyme catalyses (2R,3S)-3-isopropylmalate = (2S)-2-isopropylmalate. It participates in amino-acid biosynthesis; L-leucine biosynthesis; L-leucine from 3-methyl-2-oxobutanoate: step 2/4. Functionally, catalyzes the isomerization between 2-isopropylmalate and 3-isopropylmalate, via the formation of 2-isopropylmaleate. This chain is 3-isopropylmalate dehydratase small subunit, found in Rhizobium rhizogenes (strain K84 / ATCC BAA-868) (Agrobacterium radiobacter).